Here is a 238-residue protein sequence, read N- to C-terminus: Accessory gene regulator A (238 aa).

In terms of domain architecture, Response regulatory spans 2 to 125 (KIFICEDDPK…LRTRIIDCLE (124 aa)). Aspartate 59 carries the post-translational modification 4-aspartylphosphate. In terms of domain architecture, HTH LytTR-type spans 143-238 (IELKRGSNSV…YASVRNVKKI (96 aa)).

The protein localises to the cytoplasm. Required for high-level post-exponential phase expression of a series of secreted proteins. In Staphylococcus aureus (strain COL), this protein is Accessory gene regulator A (agrA).